A 160-amino-acid polypeptide reads, in one-letter code: SsrA-binding protein (160 aa).

The protein belongs to the SmpB family.

The protein resides in the cytoplasm. Functionally, required for rescue of stalled ribosomes mediated by trans-translation. Binds to transfer-messenger RNA (tmRNA), required for stable association of tmRNA with ribosomes. tmRNA and SmpB together mimic tRNA shape, replacing the anticodon stem-loop with SmpB. tmRNA is encoded by the ssrA gene; the 2 termini fold to resemble tRNA(Ala) and it encodes a 'tag peptide', a short internal open reading frame. During trans-translation Ala-aminoacylated tmRNA acts like a tRNA, entering the A-site of stalled ribosomes, displacing the stalled mRNA. The ribosome then switches to translate the ORF on the tmRNA; the nascent peptide is terminated with the 'tag peptide' encoded by the tmRNA and targeted for degradation. The ribosome is freed to recommence translation, which seems to be the essential function of trans-translation. The chain is SsrA-binding protein from Chloroflexus aurantiacus (strain ATCC 29364 / DSM 637 / Y-400-fl).